A 517-amino-acid chain; its full sequence is Pentatricopeptide repeat-containing protein At1g13040, mitochondrial (517 aa).

The transit peptide at 1–57 directs the protein to the mitochondrion; the sequence is MHQTLGAVRLAYRSRIANLVKSGMIDNAVQVFDEMRHSSYRVFSFDYNRFIGVLVRE. 14 PPR repeats span residues 8 to 42, 43 to 77, 78 to 112, 113 to 147, 148 to 182, 183 to 218, 219 to 253, 254 to 288, 289 to 320, 324 to 358, 359 to 393, 394 to 428, 429 to 463, and 464 to 498; these read VRLAYRSRIANLVKSGMIDNAVQVFDEMRHSSYRV, FSFDYNRFIGVLVRESRFELAEAIYWDMKPMGFSL, IPFTYSRFISGLCKVKKFDLIDALLSDMETLGFIP, DIWAFNVYLDLLCRENKVGFAVQTFFCMVQRGREP, DVVSYTILINGLFRAGKVTDAVEIWNAMIRSGVSP, DNKACAALVVGLCHARKVDLAYEMVAEEIKSARVKL, STVVYNALISGFCKAGRIEKAEALKSYMSKIGCEP, DLVTYNVLLNYYYDNNMLKRAEGVMAEMVRSGIQL, DAYSYNQLLKRHCRVSHPDKCYNFMVKEMEPR, DVVSYSTLIETFCRASNTRKAYRLFEEMRQKGMVM, NVVTYTSLIKAFLREGNSSVAKKLLDQMTELGLSP, DRIFYTTILDHLCKSGNVDKAYGVFNDMIEHEITP, DAISYNSLISGLCRSGRVTEAIKLFEDMKGKECCP, and DELTFKFIIGGLIRGKKLSAAYKVWDQMMDKGFTL.

It belongs to the PPR family. P subfamily.

The protein resides in the mitochondrion. The chain is Pentatricopeptide repeat-containing protein At1g13040, mitochondrial from Arabidopsis thaliana (Mouse-ear cress).